We begin with the raw amino-acid sequence, 256 residues long: Pro-opiomelanocortin (256 aa).

A signal peptide spans 1–26 (MPRSCYSRSGTLLLALLLQISMEVRG). C28 and C50 are oxidised to a cystine. T71 is a glycosylation site (O-linked (GalNAc...) threonine). F87 bears the Phenylalanine amide mark. The interval 88–120 (GRGNSSGASQKREEEAAAADPGFHGDGVEPGLR) is disordered. N-linked (GlcNAc...) asparagine glycosylation occurs at N91. The propeptide occupies 100–122 (EEEAAAADPGFHGDGVEPGLRED). N-acetylserine; in Corticotropin is present on S125. V137 carries the valine amide modification. At S155 the chain carries Phosphoserine.

It belongs to the POMC family. Post-translationally, specific enzymatic cleavages at paired basic residues yield the different active peptides. ACTH and MSH are produced by the pituitary gland.

The protein resides in the secreted. In terms of biological role, ACTH stimulates the adrenal glands to release cortisol. MSH (melanocyte-stimulating hormone) increases the pigmentation of skin by increasing melanin production in melanocytes. Its function is as follows. Beta-endorphin and Met-enkephalin are endogenous opiates. Functionally, stimulates the adrenal glands to release cortisol. In terms of biological role, anorexigenic peptide. Increases the pigmentation of skin by increasing melanin production in melanocytes. Increases the pigmentation of skin by increasing melanin production in melanocytes. Its function is as follows. Endogenous orexigenic opiate. Functionally, endogenous opiate. The polypeptide is Pro-opiomelanocortin (POMC) (Cavia porcellus (Guinea pig)).